The chain runs to 367 residues: 3-dehydroquinate synthase (367 aa).

Residues 108–112 (GVIGD), 132–133 (TT), Lys-145, and Lys-154 each bind NAD(+). Zn(2+) contacts are provided by Glu-187, His-249, and His-267.

The protein belongs to the sugar phosphate cyclases superfamily. Dehydroquinate synthase family. Co(2+) serves as cofactor. Zn(2+) is required as a cofactor. The cofactor is NAD(+).

It localises to the cytoplasm. The catalysed reaction is 7-phospho-2-dehydro-3-deoxy-D-arabino-heptonate = 3-dehydroquinate + phosphate. It functions in the pathway metabolic intermediate biosynthesis; chorismate biosynthesis; chorismate from D-erythrose 4-phosphate and phosphoenolpyruvate: step 2/7. Catalyzes the conversion of 3-deoxy-D-arabino-heptulosonate 7-phosphate (DAHP) to dehydroquinate (DHQ). The chain is 3-dehydroquinate synthase from Paracoccus denitrificans (strain Pd 1222).